The following is a 294-amino-acid chain: Cytidine deaminase (294 aa).

2 consecutive CMP/dCMP-type deaminase domains span residues 48–168 (DEDA…FGPK) and 186–294 (LTGD…VLLG). 89–91 (NME) serves as a coordination point for substrate. Residue His102 coordinates Zn(2+). Glu104 functions as the Proton donor in the catalytic mechanism. The Zn(2+) site is built by Cys129 and Cys132.

It belongs to the cytidine and deoxycytidylate deaminase family. As to quaternary structure, homodimer. Zn(2+) is required as a cofactor.

It catalyses the reaction cytidine + H2O + H(+) = uridine + NH4(+). It carries out the reaction 2'-deoxycytidine + H2O + H(+) = 2'-deoxyuridine + NH4(+). This enzyme scavenges exogenous and endogenous cytidine and 2'-deoxycytidine for UMP synthesis. This is Cytidine deaminase from Salmonella newport (strain SL254).